Reading from the N-terminus, the 294-residue chain is N-acetylmuramic acid 6-phosphate etherase (294 aa).

The region spanning 54 to 217 is the SIS domain; it reads VIASFRKGGR…STTSMIGVGK (164 aa). E82 acts as the Proton donor in catalysis. E113 is a catalytic residue.

This sequence belongs to the GCKR-like family. MurNAc-6-P etherase subfamily. In terms of assembly, homodimer.

It catalyses the reaction N-acetyl-D-muramate 6-phosphate + H2O = N-acetyl-D-glucosamine 6-phosphate + (R)-lactate. Its pathway is amino-sugar metabolism; N-acetylmuramate degradation. Functionally, specifically catalyzes the cleavage of the D-lactyl ether substituent of MurNAc 6-phosphate, producing GlcNAc 6-phosphate and D-lactate. This Exiguobacterium sp. (strain ATCC BAA-1283 / AT1b) protein is N-acetylmuramic acid 6-phosphate etherase.